Consider the following 349-residue polypeptide: MSASASLPVTRAAAAPRITVLFSTEKPNANTNPYLTQLYDALPDAVQPRFFSMREALLSRYDVLHLHWPEYLLRHPSKMGTLAKQACAALLLMKLQLTGTPVVRTLHNLAPHEDRGWRERALLRWIDQLTRRWIRINATTPVRPPFTDTILHGHYRDWFATMEQSTTLPGRLLHFGLIRPYKGVEVLLDVMRDVQDPRLSLRIVGNPATPXMRTLVETACAQDARISALLAYVEEPVLAREVSACELVVLPYKQMHNSGTLLLALSLARPVLAPWSESNAAIADEVGPGWVFLYEGEFDAALLSGMLDQVRAAPRGPAPDLSQRDWPRIGQLHYRTYLEALGKDGDAAL.

The first 14 residues, 1-14 (MSASASLPVTRAAA), serve as a signal peptide directing secretion.

The protein belongs to the glycosyltransferase 94 family.

The protein resides in the cell inner membrane. It carries out the reaction beta-D-GlcA-(1-&gt;2)-alpha-D-Man-(1-&gt;3)-beta-D-Glc-(1-&gt;4)-alpha-D-Glc-di-trans,octa-cis-undecaprenyl diphosphate + GDP-alpha-D-mannose = beta-D-Man-(1-&gt;4)-beta-D-GlcA-(1-&gt;2)-alpha-D-Man-(1-&gt;3)-beta-D-Glc-(1-&gt;4)-alpha-D-Glc-di-trans,octa-cis-undecaprenyl diphosphate + GDP + H(+). It functions in the pathway glycan biosynthesis; xanthan biosynthesis. Nonprocessive beta-mannosyltransferase that catalyzes the transfer of a mannose residue from GDP-mannose to glucuronic acid-beta-1,2-mannose-alpha-1,3-glucose-beta-1,4-glucose-PP-polyisoprenyl to form the lipid-linked pentasaccharide repeating unit of xanthan, Man-GlcA-Man-Glc(2)-PP-Pol. Is involved in the biosynthesis of the exopolysaccharide xanthan. To a lesser extent, can also use ADP-Man and even GDP-Glc as sugar donor substrates in vitro. Is unable to transfer a Man residue to the free-tetrasaccharide GlcA-Man-Glc(2) used as an acceptor, which indicates that the diphosphate group and the lipid moiety in the acceptor substrate are of major importance for acceptor binding and catalysis. The chain is GDP-mannose:glycolipid 4-beta-D-mannosyltransferase (gumI) from Xanthomonas campestris pv. campestris.